The primary structure comprises 122 residues: Large ribosomal subunit protein uL14 (122 aa).

It belongs to the universal ribosomal protein uL14 family. As to quaternary structure, part of the 50S ribosomal subunit. Forms a cluster with proteins L3 and L19. In the 70S ribosome, L14 and L19 interact and together make contacts with the 16S rRNA in bridges B5 and B8.

Its function is as follows. Binds to 23S rRNA. Forms part of two intersubunit bridges in the 70S ribosome. This is Large ribosomal subunit protein uL14 from Helicobacter pylori (strain J99 / ATCC 700824) (Campylobacter pylori J99).